A 454-amino-acid chain; its full sequence is Lipase member H (454 aa).

Residues 1–23 (MIYRKIIWGILYVTLMLFDTHRA) form the signal peptide. Asn-73, Asn-137, and Asn-151 each carry an N-linked (GlcNAc...) asparagine glycan. Ser-161 acts as the Nucleophile in catalysis. The Charge relay system role is filled by Asp-185. An intrachain disulfide couples Cys-240 to Cys-253. His-255 acts as the Charge relay system in catalysis. N-linked (GlcNAc...) asparagine glycosylation is present at Asn-267. 2 disulfide bridges follow: Cys-277/Cys-288 and Cys-291/Cys-299. A glycan (N-linked (GlcNAc...) asparagine) is linked at Asn-358. Cysteines 430 and 449 form a disulfide.

Belongs to the AB hydrolase superfamily. Lipase family.

It localises to the secreted. Its subcellular location is the cell membrane. It catalyses the reaction 1-hexadecanoyl-2-(9Z-octadecenoyl)-sn-glycero-3-phosphate + H2O = 2-(9Z-octadecenoyl)-sn-glycero-3-phosphate + hexadecanoate + H(+). In terms of biological role, hydrolyzes specifically phosphatidic acid (PA) to produce 2-acyl lysophosphatidic acid (LPA; a potent bioactive lipid mediator) and fatty acid. Does not hydrolyze other phospholipids, like phosphatidylserine (PS), phosphatidylcholine (PC) and phosphatidylethanolamine (PE) or triacylglycerol (TG). This chain is Lipase member H (liph), found in Danio rerio (Zebrafish).